The sequence spans 176 residues: MKSLVLYSSLTGNTKKIAYTIYDEIQEEKDIKDVNELVDYGIDYENYDIVFLGYWVDKGICDKNSKQVLENIHNKKIALFGTMGASEKGSYGASIIEKIESIIPKDNEILGSFICQGKIAEGLKAKYKEMLKLSPDNEHIRQQLNNHEESQSHPDEQEIYEASMFAKNMMIKASIV.

It functions in the pathway porphyrin-containing compound metabolism; protoheme degradation. Its function is as follows. Together with BilR, catalyzes reduction of mesobilirubin and/or bilirubin to urobilinogen, a key step during heme degradation. BilS is probably involved in electron transfer for the bilirubin reductase BilR. This is Flavodoxin-like domain-containing protein BilS from Clostridioides difficile (strain CD3).